Here is a 418-residue protein sequence, read N- to C-terminus: Ankyrin repeat domain-containing protein 61 (418 aa).

ANK repeat units lie at residues 27-57 (ALHSKLYEAIMREDCTTIEVLLRNHPVNQPI), 75-104 (ESIIPIHLAAKYHKAQSLLCLLRHGADPEV), 132-161 (NRTHRILTDIQNSSITCLRILCAHGAQVNT), 167-196 (NKRSPLHLAIAYGCYPVLSILTQNGADVNA), 200-229 (ASMTPLHMAANMLNKEMMETLIAYGANVNC), 234-273 (TGNTPLKLAVCTASSKAGRLLGAGVSCIRLLLTHGAKVNA), 277-306 (KGQTAIHEACFGGREAIINLLLEFEANVNI), and 310-343 (NGESPIYMYLQRSCNVRDTALLARLLYHTYPLRM).

The protein is Ankyrin repeat domain-containing protein 61 (ANKRD61) of Homo sapiens (Human).